Reading from the N-terminus, the 794-residue chain is Mitochondrial intermediate peptidase (794 aa).

A mitochondrion-targeting transit peptide spans 1 to 39 (MRVTSSRLLQGGSLVSRVLKRRLNNASRTKKGWFSTRTL). H581 contacts Zn(2+). Residue E582 is part of the active site. Zn(2+)-binding residues include H585 and H588.

The protein belongs to the peptidase M3 family. The cofactor is Zn(2+).

It localises to the mitochondrion matrix. It carries out the reaction Release of an N-terminal octapeptide as second stage of processing of some proteins imported into the mitochondrion.. Functionally, cleaves proteins, imported into the mitochondrion, to their mature size. While most mitochondrial precursor proteins are processed to the mature form in one step by mitochondrial processing peptidase (MPP), the sequential cleavage by MIP of an octapeptide after initial processing by MPP is a required step for a subgroup of nuclear-encoded precursor proteins destined for the matrix or the inner membrane. This chain is Mitochondrial intermediate peptidase (OCT1), found in Debaryomyces hansenii (strain ATCC 36239 / CBS 767 / BCRC 21394 / JCM 1990 / NBRC 0083 / IGC 2968) (Yeast).